The following is a 136-amino-acid chain: Large ribosomal subunit protein uL16 (136 aa).

It belongs to the universal ribosomal protein uL16 family. As to quaternary structure, part of the 50S ribosomal subunit.

Its function is as follows. Binds 23S rRNA and is also seen to make contacts with the A and possibly P site tRNAs. This Shigella flexneri protein is Large ribosomal subunit protein uL16.